The sequence spans 485 residues: MGRYSGKTCRLLFMLVLTVAFFVAELVSGYLGNSIALLSDSFNMLSDLISLCVGLSAGYIARRPTRGFSATYGYARAEVVGALSNAVFLTALCFTIFVEAVLRLARPERIDDPELVLIVGVLGLLVNVVGLLIFQDCAAWFACCLRGRSRRLQQRQQLAEGCVPGAFGGPQGAEDPRRAADPTAPGSDSAVTLRGTSVERKREKGATVFANVAGDSFNTQNEPEDMMKKEKKSEALNIRGVLLHVMGDALGSVVVVITAIIFYVLPLKSEDPCNWQCYIDPSLTVLMVIIILSSAFPLIKETAAILLQMVPKGVNMEELMSKLSAVPGISSVHEVHIWELVSGKIIATLHIKYPKDRGYQDASTKIREIFHHAGIHNVTIQFENVDLKEPLEQKDLLLLCNSPCISKGCAKQLCCPPGALPLAHVNGCAEHNGGPSLDTYGSDGLSRRDAREVAIEVSLDSCLSDHGQSLNKTQEDQCYVNRTHF.

The Cytoplasmic segment spans residues 1-10 (MGRYSGKTCR). The helical transmembrane segment at 11-31 (LLFMLVLTVAFFVAELVSGYL) threads the bilayer. Over 32-40 (GNSIALLSD) the chain is Extracellular. The chain crosses the membrane as a helical span at residues 41–61 (SFNMLSDLISLCVGLSAGYIA). At 62 to 81 (RRPTRGFSATYGYARAEVVG) the chain is on the cytoplasmic side. Residues 82–102 (ALSNAVFLTALCFTIFVEAVL) traverse the membrane as a helical segment. Topologically, residues 103–113 (RLARPERIDDP) are extracellular. The helical transmembrane segment at 114–134 (ELVLIVGVLGLLVNVVGLLIF) threads the bilayer. Residues 135-244 (QDCAAWFACC…ALNIRGVLLH (110 aa)) lie on the Cytoplasmic side of the membrane. The disordered stretch occupies residues 167–196 (FGGPQGAEDPRRAADPTAPGSDSAVTLRGT). The helical transmembrane segment at 245–265 (VMGDALGSVVVVITAIIFYVL) threads the bilayer. The Extracellular segment spans residues 266 to 278 (PLKSEDPCNWQCY). A helical transmembrane segment spans residues 279 to 299 (IDPSLTVLMVIIILSSAFPLI). Over 300-485 (KETAAILLQM…DQCYVNRTHF (186 aa)) the chain is Cytoplasmic. The tract at residues 308–485 (QMVPKGVNME…DQCYVNRTHF (178 aa)) is required for plasma membrane localization.

Belongs to the cation diffusion facilitator (CDF) transporter (TC 2.A.4) family. SLC30A subfamily. In terms of assembly, forms homodimers. Forms heterodimers and high-molecular weight oligomers with SLC30A3, SLC30A2 and SLC30A4; heterodimerization is mediated by covalent-bound tyrosine residues, occurs probably in a tissue-specific manner and could mediate the intracellular zinc transport activity into early endosomes and recycling endosomes. Specifically expressed in fetal liver and fetal brain. Expressed in adult tissues with relative levels small intestine &gt; liver &gt; testes &gt; brain &gt; ovary &gt; colon &gt; cervix &gt; prostate &gt; placenta. Expressed in liver and neurons of the nervous system (at protein level).

The protein resides in the cell membrane. It localises to the golgi apparatus membrane. Its subcellular location is the recycling endosome membrane. It is found in the early endosome membrane. The enzyme catalyses Mn(2+)(out) + Ca(2+)(in) = Mn(2+)(in) + Ca(2+)(out). The catalysed reaction is Zn(2+)(in) = Zn(2+)(out). In terms of biological role, calcium:manganese antiporter of the plasma membrane mediating the efflux of intracellular manganese coupled to an active extracellular calcium exchange. Required for intracellular manganese homeostasis, an essential cation for the function of several enzymes, including some crucially important for the metabolism of neurotransmitters and other neuronal metabolic pathways. Manganese can also be cytotoxic and induce oxidative stress, mitochondrial dysfunction and apoptosis. Could also have an intracellular zinc ion transporter activity, directly regulating intracellular zinc ion homeostasis and more indirectly various signaling pathway and biological processes. The sequence is that of Calcium/manganese antiporter SLC30A10 from Homo sapiens (Human).